The following is a 108-amino-acid chain: Transcription initiation factor IIA subunit 2 (108 aa).

This sequence belongs to the TFIIA subunit 2 family. As to quaternary structure, TFIIA is a heterodimer of the large unprocessed subunit 1 and a small subunit gamma. It was originally believed to be a heterotrimer of an alpha, a beta and a gamma subunit. Interacts with NCOA6 general coactivator. TFIIA forms a complex with TBP.

The protein resides in the nucleus. Its function is as follows. TFIIA is a component of the transcription machinery of RNA polymerase II and plays an important role in transcriptional activation. TFIIA in a complex with TBP mediates transcriptional activity. In Oncorhynchus mykiss (Rainbow trout), this protein is Transcription initiation factor IIA subunit 2 (gtf2a2).